The primary structure comprises 452 residues: MEKIIGLMSRDDWVYTGLLLFSFAASCYVRKLGNNILASGALGFAMALFIIGPRIAYSLGICAIAVGIQAFAPKKKVPFYVFLTTFTYLMFVRFAHYFLPVVEVASHTNVIQLIITLRIIGITFEENDAWLHKNDENATKRYLTRMPTLLEKFAYFYHFCGLFTGPYYTYQMLLDSQNPALQSWDPTPEVTSRFVRLLWSVPAFVITNHYFPLDSLRSDAIWEVSFFTRLVYAALIFVVFKTRVYSAWAIAESICVILGIGIYPAASNPKIIVGPTDLKVFEGLRDKENVEMNSDAIVNLDIPKVEFSDGFRDGMKAWNRSVQTWLALYVHSRVKFMRVETTMLVSAIWHGTYAGYFMSFGVVAMCAILEDVIFKLVPVNPETGLRPQWFRILYTHTIRCRGFEMLATGFLLKNASDVHHFWSSIYYWLPLLCVPFYIYSVKTAAPKLKLVV.

4 consecutive transmembrane segments (helical) span residues Ile4 to Ala24, Pro53 to Pro73, Phe79 to Leu99, and Val104 to Phe124. N-linked (GlcNAc...) asparagine glycosylation is present at Asn137. 3 helical membrane passes run Phe153–Leu173, Ala220–Phe240, and Val244–Pro264. An N-linked (GlcNAc...) asparagine glycan is attached at Asn319. His350 is a catalytic residue. Residues Ala354–Phe374 form a helical membrane-spanning segment. Asn414 carries N-linked (GlcNAc...) asparagine glycosylation. A helical membrane pass occupies residues Phe421–Val441.

It belongs to the membrane-bound acyltransferase family.

The protein resides in the membrane. The catalysed reaction is a 1-acyl-sn-glycero-3-phospho-(1D-myo-inositol) + an acyl-CoA = a 1,2-diacyl-sn-glycero-3-phospho-(1D-myo-inositol) + CoA. It catalyses the reaction a fatty acyl-[ACP] + a 1-acyl-sn-glycero-3-phosphate = a 1,2-diacyl-sn-glycero-3-phosphate + holo-[ACP]. It participates in lipid metabolism; phospholipid metabolism. Its function is as follows. Acyltransferase which mediates the conversion of lysophosphatidylinositol (1-acylglycerophosphatidylinositol or LPI) into phosphatidylinositol (1,2-diacyl-sn-glycero-3-phosphoinositol or PI) (LPIAT activity). Prefers arachidonoyl-CoA or eicosapentaenoic acid (EPA) as the acyl donor. Prefers sn-2-LPI rather than sn-1-LPI as the acyl acceptor. Lysophospholipid acyltransferases (LPLATs) catalyze the reacylation step of the phospholipid remodeling pathway also known as the Lands cycle. The protein is Membrane-bound acylglycerophosphatidylinositol O-acyltransferase mboa-7 of Caenorhabditis briggsae.